Here is a 292-residue protein sequence, read N- to C-terminus: High-affinity heme uptake system protein IsdE (292 aa).

The signal sequence occupies residues Met1–Ser19. Cys20 carries the N-palmitoyl cysteine lipid modification. The S-diacylglycerol cysteine moiety is linked to residue Cys20. The Fe/B12 periplasmic-binding domain occupies Arg35 to Lys291. The heme site is built by Val41, Ala42, Ser60, Tyr61, Met78, and His229.

It belongs to the bacterial solute-binding protein 8 family. The cofactor is heme b.

The protein resides in the cell membrane. Its function is as follows. Involved in heme (porphyrin) scavenging. Binds Fe(2+) and Fe(3+) heme but the largest fraction is Fe(2+) heme. Functions as a high-affinity heme binding protein and probably has a role in relaying heme-iron from cell wall-anchored isd proteins receptors to the probable permease IsdF. This Staphylococcus aureus (strain Mu3 / ATCC 700698) protein is High-affinity heme uptake system protein IsdE (isdE).